Here is a 2890-residue protein sequence, read N- to C-terminus: Bifunctional DNA-directed RNA polymerase subunit beta-beta' (2890 aa).

A DNA-directed RNA polymerase subunit beta region spans residues 1–1377 (MSKKIPLKNR…DINIFGDEMD (1377 aa)). The DNA-directed RNA polymerase subunit beta' stretch occupies residues 1384-2890 (PIVIKEDDRP…LRTIEDSPKI (1507 aa)). Zn(2+) is bound by residues Cys1449, Cys1451, Cys1465, and Cys1468. Mg(2+) is bound by residues Asp1849, Asp1851, and Asp1853. Residues Cys2179, Cys2253, Cys2260, and Cys2263 each coordinate Zn(2+).

In the N-terminal section; belongs to the RNA polymerase beta chain family. It in the C-terminal section; belongs to the RNA polymerase beta' chain family. As to quaternary structure, the RNAP catalytic core consists of 2 alpha, 1 beta/beta' and 1 omega subunit. When a sigma factor is associated with the core the holoenzyme is formed, which can initiate transcription. The cofactor is Mg(2+). It depends on Zn(2+) as a cofactor.

The catalysed reaction is RNA(n) + a ribonucleoside 5'-triphosphate = RNA(n+1) + diphosphate. Its function is as follows. DNA-dependent RNA polymerase catalyzes the transcription of DNA into RNA using the four ribonucleoside triphosphates as substrates. This chain is Bifunctional DNA-directed RNA polymerase subunit beta-beta' (rpoBC), found in Helicobacter acinonychis (strain Sheeba).